The primary structure comprises 421 residues: Cell division protein FtsA (421 aa).

This sequence belongs to the FtsA/MreB family. As to quaternary structure, self-interacts. Interacts with FtsZ.

The protein localises to the cell membrane. Cell division protein that is involved in the assembly of the Z ring. May serve as a membrane anchor for the Z ring. The sequence is that of Cell division protein FtsA from Buchnera aphidicola subsp. Baizongia pistaciae (strain Bp).